Consider the following 330-residue polypeptide: Ketol-acid reductoisomerase (NADP(+)) (330 aa).

One can recognise a KARI N-terminal Rossmann domain in the interval 2–182; the sequence is ARMYYDADAN…GGTRAGILET (181 aa). Residues 25 to 28, serine 51, serine 53, and 83 to 86 contribute to the NADP(+) site; these read YGSQ and DEFQ. Residue histidine 108 is part of the active site. Position 134 (glycine 134) interacts with NADP(+). One can recognise a KARI C-terminal knotted domain in the interval 183 to 328; the sequence is SFREETETDL…KDLRAMFSWL (146 aa). Aspartate 191, glutamate 195, glutamate 227, and glutamate 231 together coordinate Mg(2+). Serine 252 contacts substrate.

This sequence belongs to the ketol-acid reductoisomerase family. Mg(2+) is required as a cofactor.

The enzyme catalyses (2R)-2,3-dihydroxy-3-methylbutanoate + NADP(+) = (2S)-2-acetolactate + NADPH + H(+). The catalysed reaction is (2R,3R)-2,3-dihydroxy-3-methylpentanoate + NADP(+) = (S)-2-ethyl-2-hydroxy-3-oxobutanoate + NADPH + H(+). It functions in the pathway amino-acid biosynthesis; L-isoleucine biosynthesis; L-isoleucine from 2-oxobutanoate: step 2/4. It participates in amino-acid biosynthesis; L-valine biosynthesis; L-valine from pyruvate: step 2/4. In terms of biological role, involved in the biosynthesis of branched-chain amino acids (BCAA). Catalyzes an alkyl-migration followed by a ketol-acid reduction of (S)-2-acetolactate (S2AL) to yield (R)-2,3-dihydroxy-isovalerate. In the isomerase reaction, S2AL is rearranged via a Mg-dependent methyl migration to produce 3-hydroxy-3-methyl-2-ketobutyrate (HMKB). In the reductase reaction, this 2-ketoacid undergoes a metal-dependent reduction by NADPH to yield (R)-2,3-dihydroxy-isovalerate. The sequence is that of Ketol-acid reductoisomerase (NADP(+)) from Synechococcus elongatus (strain ATCC 33912 / PCC 7942 / FACHB-805) (Anacystis nidulans R2).